Consider the following 309-residue polypeptide: Acetylglutamate kinase (309 aa).

Substrate is bound by residues 82 to 83 (GG), Arg104, and Asn206.

Belongs to the acetylglutamate kinase family. ArgB subfamily.

Its subcellular location is the cytoplasm. It carries out the reaction N-acetyl-L-glutamate + ATP = N-acetyl-L-glutamyl 5-phosphate + ADP. It functions in the pathway amino-acid biosynthesis; L-arginine biosynthesis; N(2)-acetyl-L-ornithine from L-glutamate: step 2/4. Catalyzes the ATP-dependent phosphorylation of N-acetyl-L-glutamate. The protein is Acetylglutamate kinase of Cupriavidus pinatubonensis (strain JMP 134 / LMG 1197) (Cupriavidus necator (strain JMP 134)).